Reading from the N-terminus, the 326-residue chain is tRNA uridine(34) hydroxylase (326 aa).

The Rhodanese domain occupies 123–217 (SDPEVLLIDT…YLEEVKPEES (95 aa)). Catalysis depends on C177, which acts as the Cysteine persulfide intermediate. Residues 293–326 (KSRGESHIGSDVKQVIEARRQDKVERKQRQHQEG) form a disordered region.

This sequence belongs to the TrhO family.

It catalyses the reaction uridine(34) in tRNA + AH2 + O2 = 5-hydroxyuridine(34) in tRNA + A + H2O. Functionally, catalyzes oxygen-dependent 5-hydroxyuridine (ho5U) modification at position 34 in tRNAs. The sequence is that of tRNA uridine(34) hydroxylase from Shewanella loihica (strain ATCC BAA-1088 / PV-4).